Here is a 471-residue protein sequence, read N- to C-terminus: tRNA(Ile)-lysidine synthase (471 aa).

35-40 (SGGADS) contributes to the ATP binding site.

The protein belongs to the tRNA(Ile)-lysidine synthase family.

Its subcellular location is the cytoplasm. It carries out the reaction cytidine(34) in tRNA(Ile2) + L-lysine + ATP = lysidine(34) in tRNA(Ile2) + AMP + diphosphate + H(+). In terms of biological role, ligates lysine onto the cytidine present at position 34 of the AUA codon-specific tRNA(Ile) that contains the anticodon CAU, in an ATP-dependent manner. Cytidine is converted to lysidine, thus changing the amino acid specificity of the tRNA from methionine to isoleucine. The polypeptide is tRNA(Ile)-lysidine synthase (Geobacter sulfurreducens (strain ATCC 51573 / DSM 12127 / PCA)).